A 295-amino-acid chain; its full sequence is Probable CBASS effector molecule IK1_05631 (295 aa).

4 consecutive transmembrane segments (helical) span residues 26 to 46 (IFYA…ISIY), 56 to 76 (SNTG…AYQI), 167 to 187 (ILLF…GFFV), and 190 to 210 (SMQE…IYGF).

It localises to the cell membrane. Effector protein of a CBASS antiviral system. CBASS (cyclic oligonucleotide-based antiphage signaling system) provides immunity against bacteriophage. The CD-NTase protein synthesizes cyclic nucleotides in response to infection; these serve as specific second messenger signals. The signals activate a diverse range of effectors, leading to bacterial cell death and thus abortive phage infection. A type I-B CBASS system. Functionally, protects B.subtilis against phage infection. When IK1_05630 and IK1_05631 are introduced in B.subtilis BEST7003 there is 1000-fold protection against phage SBSphiC. Both genes are required for protection. Activation leads to bacterial cell lysis and death, which occurs before the phage has finished its replication cycle, thus protecting non-infected bacteria by aborting the phage infection and preventing its propagation. The chain is Probable CBASS effector molecule IK1_05631 from Bacillus cereus (strain VD146).